The primary structure comprises 89 residues: Cell division topological specificity factor (89 aa).

This sequence belongs to the MinE family.

Prevents the cell division inhibition by proteins MinC and MinD at internal division sites while permitting inhibition at polar sites. This ensures cell division at the proper site by restricting the formation of a division septum at the midpoint of the long axis of the cell. The protein is Cell division topological specificity factor of Proteus mirabilis (strain HI4320).